A 354-amino-acid chain; its full sequence is MAAGGGQAFAWQVFPPMPTCRVYGTVAHQDGHLLVLGGCGRAGLPLDTAETLDMASHTWLALAPLPTARAGAAAVVLGKQVLVVGGVDEVQSPVAAVEAFLADEGRWERRATLPQAAMGVATVERDGMVYALGGMGPDTAPQAQVLVYESRRDRWLSLPSMPTPCYGASTFLHGNKIYVLGGRQGKLPVTAFEAFDLETRTWTRHPSLPSRRAFAGCAMAEGSVFSLGGLQQPGPHNFYSRPHFVNTVEMFDLEHGSWTKLPRSLRMRDKRADFVVGSLGGNIVAIGGLGNQPCPLASVESFSLARRRWEALPAMPTARCSCSSLQAGPRLFVIGGVAQGPSQAVEALCLRDGV.

8 Kelch repeats span residues 1–31 (MAAG…HQDG), 32–79 (HLLV…VLGK), 81–127 (VLVV…ERDG), 128–175 (MVYA…LHGN), 176–222 (KIYV…MAEG), 224–281 (VFSL…SLGG), 282–329 (NIVA…QAGP), and 331–354 (LFVI…RDGV).

The protein resides in the cytoplasm. It is found in the midbody. Its function is as follows. Involved in pinching off the separated nuclei at the cleavage furrow and in cytokinesis. Required for mitotic integrity and maintenance of chromosomal stability. Protects cells against mitotic errors, centrosomal amplification, micronucleus formation and aneuploidy. Plays a key role of midbody function involving abscission of the daughter cells during cytokinesis and appropriate chromosomal and nuclear segregation into the daughter cells. The sequence is that of Kelch domain-containing protein 8B (Klhdc8b) from Rattus norvegicus (Rat).